Here is a 199-residue protein sequence, read N- to C-terminus: Dephospho-CoA kinase (199 aa).

Residues 3-199 (VLGLTGSIGM…AAARMPRRRP (197 aa)) enclose the DPCK domain. Position 11 to 16 (11 to 16 (GMGKST)) interacts with ATP.

The protein belongs to the CoaE family.

The protein localises to the cytoplasm. It catalyses the reaction 3'-dephospho-CoA + ATP = ADP + CoA + H(+). The protein operates within cofactor biosynthesis; coenzyme A biosynthesis; CoA from (R)-pantothenate: step 5/5. In terms of biological role, catalyzes the phosphorylation of the 3'-hydroxyl group of dephosphocoenzyme A to form coenzyme A. In Rhodopseudomonas palustris (strain HaA2), this protein is Dephospho-CoA kinase.